We begin with the raw amino-acid sequence, 546 residues long: Arginine--tRNA ligase (546 aa).

Positions 122–132 (ANPTGPFTVGH) match the 'HIGH' region motif.

The protein belongs to the class-I aminoacyl-tRNA synthetase family. Monomer.

The protein localises to the cytoplasm. The enzyme catalyses tRNA(Arg) + L-arginine + ATP = L-arginyl-tRNA(Arg) + AMP + diphosphate. The polypeptide is Arginine--tRNA ligase (argS) (Thermotoga maritima (strain ATCC 43589 / DSM 3109 / JCM 10099 / NBRC 100826 / MSB8)).